The primary structure comprises 370 residues: Apolipoprotein A-V (370 aa).

An N-terminal signal peptide occupies residues 1–21 (MASMIALLTWALALLPALASA). At serine 59 the chain carries Phosphoserine.

The protein belongs to the apolipoprotein A1/A4/E family. In terms of assembly, interacts with GPIHBP1. Interacts with SORL1; this interaction leads to APOA5 internalization and sorting either to lysosomes and degradation, or to the trans-Golgi network.

It is found in the secreted. The protein resides in the early endosome. It localises to the late endosome. The protein localises to the golgi apparatus. Its subcellular location is the trans-Golgi network. In terms of biological role, minor apolipoprotein mainly associated with HDL and to a lesser extent with VLDL. May also be associated with chylomicrons. Important determinant of plasma triglyceride (TG) levels by both being a potent stimulator of apo-CII lipoprotein lipase (LPL) TG hydrolysis and an inhibitor of the hepatic VLDL-TG production rate (without affecting the VLDL-apoB production rate). Activates poorly lecithin:cholesterol acyltransferase (LCAT) and does not enhance efflux of cholesterol from macrophages. Binds heparin. The sequence is that of Apolipoprotein A-V (APOA5) from Acinonyx jubatus (Cheetah).